Here is a 434-residue protein sequence, read N- to C-terminus: Pre-mRNA-splicing factor PRP46 (434 aa).

WD repeat units follow at residues 120–160, 163–202, 205–244, 247–288, 290–329, 331–369, and 380–419; these read GHTG…LKIT, GHVM…AIRD, GHLS…EIMV, GHKS…KVLT, HSRN…TNFQ, QNTG…KYQS, and ESER…TEDT.

This sequence belongs to the WD repeat PRL1/PRL2 family. In terms of assembly, associated with the spliceosome.

It localises to the cytoplasm. The protein resides in the nucleus. Its function is as follows. Involved in pre-mRNA splicing and required for cell cycle progression at G2/M. In Kluyveromyces lactis (strain ATCC 8585 / CBS 2359 / DSM 70799 / NBRC 1267 / NRRL Y-1140 / WM37) (Yeast), this protein is Pre-mRNA-splicing factor PRP46 (PRP46).